We begin with the raw amino-acid sequence, 28 residues long: uncharacterized protein (28 aa).

The span at 1–18 (MLPRKYKPAYKKQAHRVK) shows a compositional bias: basic residues. The disordered stretch occupies residues 1-28 (MLPRKYKPAYKKQAHRVKSNPQPAYTFQ). Residues 19–28 (SNPQPAYTFQ) are compositionally biased toward polar residues.

This is an uncharacterized protein from Saccharomyces cerevisiae (strain ATCC 204508 / S288c) (Baker's yeast).